The primary structure comprises 109 residues: Small ribosomal subunit protein uS17 (109 aa).

It belongs to the universal ribosomal protein uS17 family. As to quaternary structure, part of the 30S ribosomal subunit.

Functionally, one of the primary rRNA binding proteins, it binds specifically to the 5'-end of 16S ribosomal RNA. In Thermoplasma acidophilum (strain ATCC 25905 / DSM 1728 / JCM 9062 / NBRC 15155 / AMRC-C165), this protein is Small ribosomal subunit protein uS17.